The sequence spans 539 residues: Tetracenomycin B2 monooxygenase-dioxygenase (539 aa).

Leucine 15, glutamate 35, glutamine 128, and leucine 152 together coordinate FAD. The active-site Proton acceptor is tyrosine 231. An FAD-binding site is contributed by aspartate 313.

This sequence belongs to the PheA/TfdB FAD monooxygenase family. FAD serves as cofactor.

The enzyme catalyses tetracenomycin B2 + 2 NADPH + 2 O2 + 2 H(+) = 8-demethyltetracenomycin C + 2 NADP(+) + H2O. It carries out the reaction tetracenomycin A2 + 2 NADPH + 2 O2 + 2 H(+) = tetracenomycin C + 2 NADP(+) + H2O. It functions in the pathway antibiotic biosynthesis. Involved in the biosynthesis of elloramycin, an antitumor polyketide. In vivo, probably catalyzes the triple hydroxylation of 8-demethyltetracenomycin A2 (tetracenomycin B2) at positions C-4, C-4a and C-12a to give 8-demethyltetracenomycin C (8-DMTC). In vitro, catalyzes the triple hydroxylation of tetracenomycin A2 (TCM A2) to give tetracenomycin C (TCM C). Uses NADPH as an electron donor and requires molecular O(2). This chain is Tetracenomycin B2 monooxygenase-dioxygenase, found in Streptomyces olivaceus.